The primary structure comprises 194 residues: Putative 3-methyladenine DNA glycosylase (194 aa).

This sequence belongs to the DNA glycosylase MPG family.

The sequence is that of Putative 3-methyladenine DNA glycosylase from Anaeromyxobacter sp. (strain Fw109-5).